The chain runs to 331 residues: 6-phosphogluconolactonase (331 aa).

N6-acetyllysine is present on K287.

The protein belongs to the cycloisomerase 2 family.

It carries out the reaction 6-phospho-D-glucono-1,5-lactone + H2O = 6-phospho-D-gluconate + H(+). It functions in the pathway carbohydrate degradation; pentose phosphate pathway; D-ribulose 5-phosphate from D-glucose 6-phosphate (oxidative stage): step 2/3. Catalyzes the hydrolysis of 6-phosphogluconolactone to 6-phosphogluconate. This chain is 6-phosphogluconolactonase, found in Shigella flexneri.